The following is a 683-amino-acid chain: PTS system mannose-specific EIIBCA component (683 aa).

The 89-residue stretch at 1 to 89 folds into the PTS EIIB type-1 domain; the sequence is MASKLTTTSQ…LKLDGMKHFA (89 aa). C28 serves as the catalytic Phosphocysteine intermediate; for EIIB activity. The PTS EIIC type-1 domain occupies 117–476; it reads EFLSDTFRPI…NEERDEARAK (360 aa). The next 10 helical transmembrane spans lie at 126–146, 162–182, 193–213, 225–245, 260–280, 303–323, 344–364, 376–396, 409–429, and 442–462; these read ILWA…ADTF, YVFL…MVGA, WIGA…LGSA, VLND…GLYW, MVFV…FLLG, FILS…GLHW, PMGA…LLSI, LGGM…YGVL, GCLA…AFVF, and LGYT…VLAL. Residues 550-654 form the PTS EIIA type-1 domain; the sequence is DPIFAAGKLG…PLITPVVVSN (105 aa). The active-site Tele-phosphohistidine intermediate; for EIIA activity is H602.

It localises to the cell membrane. It catalyses the reaction D-mannose(out) + N(pros)-phospho-L-histidyl-[protein] = D-mannose 6-phosphate(in) + L-histidyl-[protein]. Its function is as follows. The phosphoenolpyruvate-dependent sugar phosphotransferase system (sugar PTS), a major carbohydrate active -transport system, catalyzes the phosphorylation of incoming sugar substrates concomitantly with their translocation across the cell membrane. This system is involved in mannose transport. The polypeptide is PTS system mannose-specific EIIBCA component (ptsM) (Corynebacterium glutamicum (strain ATCC 13032 / DSM 20300 / JCM 1318 / BCRC 11384 / CCUG 27702 / LMG 3730 / NBRC 12168 / NCIMB 10025 / NRRL B-2784 / 534)).